We begin with the raw amino-acid sequence, 101 residues long: Small ribosomal subunit protein uS14 (101 aa).

It belongs to the universal ribosomal protein uS14 family. As to quaternary structure, part of the 30S ribosomal subunit. Contacts proteins S3 and S10.

Binds 16S rRNA, required for the assembly of 30S particles and may also be responsible for determining the conformation of the 16S rRNA at the A site. This Escherichia coli O8 (strain IAI1) protein is Small ribosomal subunit protein uS14.